The following is a 2476-amino-acid chain: Zonadhesin (2476 aa).

The first 29 residues, 1–29 (MLGLPALAGPMAMPHPPLIPSTPTLLAFS), serve as a signal peptide directing secretion. The Extracellular segment spans residues 30–2418 (FPGGFYMLLD…SPKKPEASNR (2389 aa)). 2 MAM domains span residues 31–144 (PGGF…PCEE) and 147–312 (PQCD…TCRG). Residues Asn-109 and Asn-269 are each glycosylated (N-linked (GlcNAc...) asparagine). 3 disordered regions span residues 313 to 332 (PSET…KPTV), 358 to 462 (PTVP…TERT), and 537 to 632 (ERTT…RTTI). The segment at 319–687 (STEKPVAPTE…ATTVTPRTTI (369 aa)) is 53 X approximate heptapeptide repeats (mucin-like domain). Positions 358–373 (PTVPTEKPTIPTEKST) are enriched in low complexity. A compositionally biased stretch (pro residues) spans 400 to 412 (TTPPEGPAVPPKG). A compositionally biased stretch (basic and acidic residues) spans 423–433 (HTEKSTVHTEK). The span at 451-462 (PTKRTTTPTERT) shows a compositional bias: low complexity. A TIL 1 domain is found at 690 to 739 (CPPNAHFERCACPVSCQSPTPNCELFCKPGCVCDPGFLFSGSHCVNASSC). N-linked (GlcNAc...) asparagine glycosylation is found at Asn-735, Asn-758, and Asn-833. The VWFC 1 domain maps to 740-794 (DCFYNDNYYKLGTDWFSPNCTEHCHCRPSSRMECQTFKCGTHTVCQLKNGQYGCH). A VWFD 1 domain is found at 799-976 (ATCSVYGDPH…TSEDADQQCE (178 aa)). Cystine bridges form between Cys-801-Cys-936 and Cys-823-Cys-975. Residues 943 to 983 (SSNDNQKPDGSPAKDEKELGSSWQTSEDADQQCEENQVSPP) form a disordered region. The TIL 2 domain maps to 1070 to 1123 (CPRNSRYTLCARLCPDTCHSEFSGRACKDRCVEGCECDPGFVLSGLQCVSRSEC). The VWFC 2 domain maps to 1124–1180 (GCLDSTAGYVKVGERWFKPGCRQLCICEGNNRTRCVLWRCQAQEFCGQQDGIYGCHA). The N-linked (GlcNAc...) asparagine glycan is linked to Asn-1154. One can recognise a VWFD 2 domain in the interval 1184-1364 (ATCTVSGDPH…INELSEPGCF (181 aa)). 2 disulfides stabilise this stretch: Cys-1186-Cys-1324 and Cys-1208-Cys-1363. 2 N-linked (GlcNAc...) asparagine glycosylation sites follow: Asn-1329 and Asn-1448. Residues 1456-1511 (CPSGSSYSTCANPCPATCLSLNNPSYCPSTLPCAEGCECQKGHILSGTSCVPLSQC) enclose the TIL 3 domain. The region spanning 1512–1568 (GCTTQRGSYHPVGESWYTDNSCSRLCTCSAHNNISCRQASCKPSQMCWPQDGLIRCR) is the VWFC 3 domain. 3 N-linked (GlcNAc...) asparagine glycosylation sites follow: Asn-1544, Asn-1596, and Asn-1654. The region spanning 1573–1751 (GVCRIPDTSH…RDKEIDPNCQ (179 aa)) is the VWFD 3 domain. Disulfide bonds link Cys-1575–Cys-1712 and Cys-1597–Cys-1750. Basic and acidic residues predominate over residues 1747–1759 (DPNCQEDDRKTEA). The disordered stretch occupies residues 1747–1768 (DPNCQEDDRKTEAESQEQPSAN). Asn-1843 carries N-linked (GlcNAc...) asparagine glycosylation. A TIL 4 domain is found at 1851–1907 (CSAHSVYTSCVPSCLPSCQDPEGQCTGAGAPSTCEEGCICEPGYVLSEQQCVARSQC). In terms of domain architecture, VWFC 4 spans 1908-1963 (GCRDARGTFLPVGRFRLSSGCSQMCVCTAGAIECRPFTCPSGSQCEPNEDGKDFCQ). Residue Asn-1965 is glycosylated (N-linked (GlcNAc...) asparagine). The 178-residue stretch at 1968–2145 (NLCSVFGDPH…WEVKAKEGHP (178 aa)) folds into the VWFD 4 domain. An intrachain disulfide couples Cys-1970 to Cys-2107. 3 N-linked (GlcNAc...) asparagine glycosylation sites follow: Asn-2122, Asn-2165, and Asn-2178. Positions 2257-2310 (CPANTVYQSCMTPCPASCATLAVPRACDGPCVEGCASLPGYIYSGAQSLPMAHC) constitute a TIL 5 domain. The 55-residue stretch at 2311 to 2365 (GCTNNGVYYQQGDSFVTENCSQRCTCASSGVLLCEPLSCRPGEICTLGNLTRGCF) folds into the VWFC 5 domain. N-linked (GlcNAc...) asparagine glycosylation is found at Asn-2329 and Asn-2359. The 37-residue stretch at 2366–2402 (RDSPCLQNPCQNDGRCREQGTHFTCECELGYGGDLCT) folds into the EGF-like domain. Disulfide bonds link Cys-2370-Cys-2381, Cys-2375-Cys-2390, and Cys-2392-Cys-2401. Residues 2419 to 2439 (VAILLGMLMPTVLLVPAVTRV) form a helical membrane-spanning segment. A disordered region spans residues 2438–2476 (RVSRKRRRRRRPSRERTQSQNRGKRAGTDCAPEQAYKVA). Basic residues predominate over residues 2439–2450 (VSRKRRRRRRPS). At 2440-2476 (SRKRRRRRRPSRERTQSQNRGKRAGTDCAPEQAYKVA) the chain is on the cytoplasmic side.

Probably forms covalent oligomers. The MAM domains and the mucin-like domains are missing from the zonadhesin that binds to the egg extracellular matrix. Processing might occur during sperm maturation and/or capacitation. In terms of tissue distribution, in testis, primarily in haploid spermatids. Not in lung, liver, heart, spleen, brain, kidney, epididymis.

It localises to the cell membrane. In terms of biological role, binds in a species-specific manner to the zona pellucida of the egg. May be involved in gamete recognition and/or signaling. In Sus scrofa (Pig), this protein is Zonadhesin (ZAN).